We begin with the raw amino-acid sequence, 389 residues long: Succinate--CoA ligase [ADP-forming] subunit beta (389 aa).

Residues arginine 9–lysine 236 enclose the ATP-grasp domain. ATP is bound by residues lysine 45, glycine 52 to glycine 54, alanine 94, and glutamate 99. Residues asparagine 191 and aspartate 205 each coordinate Mg(2+). Residues asparagine 256 and glycine 318–threonine 320 contribute to the substrate site.

This sequence belongs to the succinate/malate CoA ligase beta subunit family. In terms of assembly, heterotetramer of two alpha and two beta subunits. Requires Mg(2+) as cofactor.

It catalyses the reaction succinate + ATP + CoA = succinyl-CoA + ADP + phosphate. The enzyme catalyses GTP + succinate + CoA = succinyl-CoA + GDP + phosphate. It participates in carbohydrate metabolism; tricarboxylic acid cycle; succinate from succinyl-CoA (ligase route): step 1/1. In terms of biological role, succinyl-CoA synthetase functions in the citric acid cycle (TCA), coupling the hydrolysis of succinyl-CoA to the synthesis of either ATP or GTP and thus represents the only step of substrate-level phosphorylation in the TCA. The beta subunit provides nucleotide specificity of the enzyme and binds the substrate succinate, while the binding sites for coenzyme A and phosphate are found in the alpha subunit. In Paenarthrobacter aurescens (strain TC1), this protein is Succinate--CoA ligase [ADP-forming] subunit beta.